The primary structure comprises 334 residues: Peroxidase 65 (334 aa).

An N-terminal signal peptide occupies residues 1–28; sequence MSNMQFSRGFNPFVILFCLAVVAPIISA. Intrachain disulfides connect Cys42-Cys123, Cys75-Cys80, Cys129-Cys326, and Cys208-Cys236. His73 (proton acceptor) is an active-site residue. Ca(2+) is bound by residues Asp74, Gly79, Asp81, and Ser83. Residue Pro171 coordinates substrate. The N-linked (GlcNAc...) asparagine glycan is linked to Asn174. His201 serves as a coordination point for heme b. Residue Thr202 coordinates Ca(2+). N-linked (GlcNAc...) asparagine glycosylation is present at Asn238. Residues Asp250, Thr253, and Asp258 each coordinate Ca(2+). N-linked (GlcNAc...) asparagine glycosylation is found at Asn282 and Asn294.

The protein belongs to the peroxidase family. Classical plant (class III) peroxidase subfamily. The cofactor is heme b. Ca(2+) serves as cofactor.

The protein localises to the secreted. It carries out the reaction 2 a phenolic donor + H2O2 = 2 a phenolic radical donor + 2 H2O. In terms of biological role, removal of H(2)O(2), oxidation of toxic reductants, biosynthesis and degradation of lignin, suberization, auxin catabolism, response to environmental stresses such as wounding, pathogen attack and oxidative stress. These functions might be dependent on each isozyme/isoform in each plant tissue. This Arabidopsis thaliana (Mouse-ear cress) protein is Peroxidase 65 (PER65).